The chain runs to 833 residues: Ventricular zone-expressed PH domain-containing protein homolog 1 (833 aa).

Positions 201–319 (TELLALMSQL…TYLVSQLANM (119 aa)) are interaction with TGFBR1. Residues 458-505 (KGVGSDDGEDENRGDIPASISLSEIDPLGQGNDKLPFKTDTERSQLGE) form a disordered region. The segment covering 492–502 (LPFKTDTERSQ) has biased composition (basic and acidic residues). Residues 663–833 (ESTFPQQKDL…RESREVTTYL (171 aa)) are interaction with TGFBR1. The PH domain occupies 716 to 819 (QPLIEGKLKE…WLQCINVAVA (104 aa)).

The protein belongs to the MELT/VEPH family. As to quaternary structure, interacts with TGFBR1.

Its subcellular location is the cell membrane. Its function is as follows. Interacts with TGF-beta receptor type-1 (TGFBR1) and inhibits dissociation of activated SMAD2 from TGFBR1, impeding its nuclear accumulation and resulting in impaired TGF-beta signaling. May also affect FOXO, Hippo and Wnt signaling. This Homo sapiens (Human) protein is Ventricular zone-expressed PH domain-containing protein homolog 1 (VEPH1).